The following is a 356-amino-acid chain: Histidinol-phosphate aminotransferase (356 aa).

Lys214 is modified (N6-(pyridoxal phosphate)lysine).

It belongs to the class-II pyridoxal-phosphate-dependent aminotransferase family. Histidinol-phosphate aminotransferase subfamily. Homodimer. It depends on pyridoxal 5'-phosphate as a cofactor.

It catalyses the reaction L-histidinol phosphate + 2-oxoglutarate = 3-(imidazol-4-yl)-2-oxopropyl phosphate + L-glutamate. It participates in amino-acid biosynthesis; L-histidine biosynthesis; L-histidine from 5-phospho-alpha-D-ribose 1-diphosphate: step 7/9. This is Histidinol-phosphate aminotransferase from Escherichia coli O17:K52:H18 (strain UMN026 / ExPEC).